The following is a 620-amino-acid chain: Chaperone protein HscA homolog (620 aa).

Belongs to the heat shock protein 70 family.

Its function is as follows. Chaperone involved in the maturation of iron-sulfur cluster-containing proteins. Has a low intrinsic ATPase activity which is markedly stimulated by HscB. The protein is Chaperone protein HscA homolog of Shewanella sp. (strain ANA-3).